The sequence spans 254 residues: Putative epimerase LsrE (254 aa).

Residues 14 to 34 form a helical membrane-spanning segment; the sequence is VALLASYPLSVGILAGQWIAL. Positions 50, 52, and 81 each coordinate a divalent metal cation. The active-site Proton acceptor is D52. Residues H81, 166 to 169, 199 to 201, and 221 to 222 contribute to the substrate site; these read GYGS, DGS, and GS. D199 is an a divalent metal cation binding site. The active-site Proton donor is the D199.

It belongs to the ribulose-phosphate 3-epimerase family. Requires a divalent metal cation as cofactor.

Its subcellular location is the cell membrane. The sequence is that of Putative epimerase LsrE (lsrE) from Salmonella typhi.